The primary structure comprises 189 residues: Hypoxanthine/guanine phosphoribosyltransferase (189 aa).

Belongs to the purine/pyrimidine phosphoribosyltransferase family. Archaeal HPRT subfamily. In terms of assembly, homodimer.

Its subcellular location is the cytoplasm. The catalysed reaction is IMP + diphosphate = hypoxanthine + 5-phospho-alpha-D-ribose 1-diphosphate. The enzyme catalyses GMP + diphosphate = guanine + 5-phospho-alpha-D-ribose 1-diphosphate. Its pathway is purine metabolism; IMP biosynthesis via salvage pathway; IMP from hypoxanthine: step 1/1. Functionally, catalyzes a salvage reaction resulting in the formation of IMP that is energically less costly than de novo synthesis. The polypeptide is Hypoxanthine/guanine phosphoribosyltransferase (Methanosarcina mazei (strain ATCC BAA-159 / DSM 3647 / Goe1 / Go1 / JCM 11833 / OCM 88) (Methanosarcina frisia)).